A 75-amino-acid polypeptide reads, in one-letter code: MNPSEMQRKGPPRRWCLQVYPTAPKRQRPSRTGHDDDGGFVEKKRGKCGEKQERSNCYCVCVERSRHRRLHFVMC.

The tract at residues 21–43 (PTAPKRQRPSRTGHDDDGGFVEK) is disordered. The span at 32 to 43 (TGHDDDGGFVEK) shows a compositional bias: basic and acidic residues.

Its subcellular location is the nucleus. Functionally, may possess a function in tumorigenesis. The sequence is that of Endogenous retrovirus group K member 10 Np9 protein (ERVK-10) from Homo sapiens (Human).